Here is a 518-residue protein sequence, read N- to C-terminus: Xylose import ATP-binding protein XylG (518 aa).

ABC transporter domains lie at 6 to 245 (LQMN…VGRE) and 262 to 507 (FEAR…LSQP). ATP is bound at residue 38–45 (GENGAGKS).

Belongs to the ABC transporter superfamily. Xylose importer (TC 3.A.1.2.4) family. In terms of assembly, the complex is composed of two ATP-binding proteins (XylG), two transmembrane proteins (XylH) and a solute-binding protein (XylF).

Its subcellular location is the cell inner membrane. The enzyme catalyses D-xylose(out) + ATP + H2O = D-xylose(in) + ADP + phosphate + H(+). Its function is as follows. Part of the ABC transporter complex XylFGH involved in xylose import. Responsible for energy coupling to the transport system. The polypeptide is Xylose import ATP-binding protein XylG (Pseudomonas fluorescens (strain Pf0-1)).